Reading from the N-terminus, the 245-residue chain is tRNA pseudouridine synthase A (245 aa).

The active-site Nucleophile is the Asp52. Residue Tyr111 participates in substrate binding.

Belongs to the tRNA pseudouridine synthase TruA family. As to quaternary structure, homodimer.

It carries out the reaction uridine(38/39/40) in tRNA = pseudouridine(38/39/40) in tRNA. Formation of pseudouridine at positions 38, 39 and 40 in the anticodon stem and loop of transfer RNAs. The protein is tRNA pseudouridine synthase A of Rickettsia bellii (strain RML369-C).